The chain runs to 313 residues: Uracil-DNA glycosylase (313 aa).

The disordered stretch occupies residues 35 to 68 (DEPMPKKCRRPAGPPKGFISTRGDTSPSSDNNHI). The span at 56–68 (RGDTSPSSDNNHI) shows a compositional bias: polar residues. D153 (proton acceptor) is an active-site residue.

This sequence belongs to the uracil-DNA glycosylase (UDG) superfamily. UNG family.

Its subcellular location is the host nucleus. It carries out the reaction Hydrolyzes single-stranded DNA or mismatched double-stranded DNA and polynucleotides, releasing free uracil.. In terms of biological role, excises uracil residues from the DNA which can arise as a result of misincorporation of dUMP residues by DNA polymerase or deamination of cytosines. Therefore may reduce deleterious uracil incorporation into the viral genome, particularly in terminally differentiated cells which lack DNA repair enzymes. The chain is Uracil-DNA glycosylase (MDV014) from Gallus gallus (Chicken).